Consider the following 147-residue polypeptide: PTPN13-like protein, Y-linked (147 aa).

As to expression, expressed in testis. Detected in spermatocytes, spermatids and spermatozoa (at protein level).

The protein is PTPN13-like protein, Y-linked (PRY) of Homo sapiens (Human).